The chain runs to 373 residues: RNA cytidine acetyltransferase (373 aa).

R53 contributes to the ATP binding site. Acetyl-CoA is bound by residues 216–218 (IAT) and 223–229 (TGMGYGS). A disordered region spans residues 246–271 (GEFEEENEAAKPADEESDDESNLLKE). R313 contacts acetyl-CoA.

It belongs to the RNA cytidine acetyltransferase family. NAT10 subfamily.

The protein resides in the nucleus. The protein localises to the nucleolus. It catalyses the reaction a cytidine in 18S rRNA + acetyl-CoA + ATP + H2O = an N(4)-acetylcytidine in 18S rRNA + ADP + phosphate + CoA + H(+). The enzyme catalyses a cytidine in tRNA + acetyl-CoA + ATP + H2O = an N(4)-acetylcytidine in tRNA + ADP + phosphate + CoA + H(+). Its function is as follows. RNA cytidine acetyltransferase with specificity toward both 18S rRNA and tRNAs. Catalyzes the formation of N(4)-acetylcytidine (ac4C) in 18S rRNA. Required for early nucleolar cleavages of precursor rRNA at sites A0, A1 and A2 during 18S rRNA synthesis. Catalyzes the formation of ac4C in serine and leucine tRNAs. Requires a tRNA-binding adapter protein for full tRNA acetyltransferase activity but not for 18S rRNA acetylation. In Achlya ambisexualis (Water mold), this protein is RNA cytidine acetyltransferase.